Here is a 384-residue protein sequence, read N- to C-terminus: N-acetyldiaminopimelate deacetylase (384 aa).

Asp-75 is an active-site residue. Residue Glu-134 is the Proton acceptor of the active site.

This sequence belongs to the peptidase M20A family. N-acetyldiaminopimelate deacetylase subfamily.

It catalyses the reaction N-acetyl-(2S,6S)-2,6-diaminopimelate + H2O = (2S,6S)-2,6-diaminopimelate + acetate. Its pathway is amino-acid biosynthesis; L-lysine biosynthesis via DAP pathway; LL-2,6-diaminopimelate from (S)-tetrahydrodipicolinate (acetylase route): step 3/3. Catalyzes the conversion of N-acetyl-diaminopimelate to diaminopimelate and acetate. The protein is N-acetyldiaminopimelate deacetylase of Lactobacillus helveticus (strain DPC 4571).